Here is a 296-residue protein sequence, read N- to C-terminus: Urease operon transcriptional activator (296 aa).

An HTH araC/xylS-type domain is found at 171-268; that stretch reads QAITHLITQE…NMTPSQFRLQ (98 aa). 2 consecutive DNA-binding regions (H-T-H motif) follow at residues 188–209 and 235–258; these read DDVA…NREG and VFQI…KRKY.

In terms of biological role, positive regulator of the expression of the urease operon. This Escherichia coli protein is Urease operon transcriptional activator (ureR).